The primary structure comprises 248 residues: Proteasome subunit alpha type-1 (248 aa).

It belongs to the peptidase T1A family. The 26S proteasome consists of a 20S proteasome core and two 19S regulatory subunits. The 20S proteasome core is composed of 28 subunits that are arranged in four stacked rings, resulting in a barrel-shaped structure. The two end rings are each formed by seven alpha subunits, and the two central rings are each formed by seven beta subunits. The catalytic chamber with the active sites is on the inside of the barrel.

It localises to the cytoplasm. Its subcellular location is the nucleus. In terms of biological role, the proteasome is a multicatalytic proteinase complex which is characterized by its ability to cleave peptides with Arg, Phe, Tyr, Leu, and Glu adjacent to the leaving group at neutral or slightly basic pH. The proteasome has an ATP-dependent proteolytic activity. The chain is Proteasome subunit alpha type-1 (psmA1) from Dictyostelium discoideum (Social amoeba).